The sequence spans 126 residues: Small ribosomal subunit protein uS12m (126 aa).

Disordered regions lie at residues 1 to 27 (MPTM…LNKC) and 106 to 126 (GIPG…KDYI). Composition is skewed to basic residues over residues 12–23 (RESKRRTKRTRA) and 109–120 (GRRRGRSKYGTK).

This sequence belongs to the universal ribosomal protein uS12 family.

The protein localises to the mitochondrion. Functionally, protein S12 is involved in the translation initiation step. This chain is Small ribosomal subunit protein uS12m (RPS12), found in Marchantia polymorpha (Common liverwort).